The primary structure comprises 460 residues: UDP-N-acetylmuramate--L-alanine ligase (460 aa).

An ATP-binding site is contributed by 112–118; that stretch reads GTHGKTT.

It belongs to the MurCDEF family.

The protein resides in the cytoplasm. It catalyses the reaction UDP-N-acetyl-alpha-D-muramate + L-alanine + ATP = UDP-N-acetyl-alpha-D-muramoyl-L-alanine + ADP + phosphate + H(+). The protein operates within cell wall biogenesis; peptidoglycan biosynthesis. Functionally, cell wall formation. This is UDP-N-acetylmuramate--L-alanine ligase from Pelobacter propionicus (strain DSM 2379 / NBRC 103807 / OttBd1).